We begin with the raw amino-acid sequence, 1139 residues long: Dual 3',5'-cyclic-AMP and -GMP phosphodiesterase beta (1139 aa).

Disordered stretches follow at residues 1–42 and 154–177; these read MGKV…NINK and GISE…STSN. The Cytoplasmic segment spans residues 1–429; that stretch reads MGKVEDFEEH…LNLNNWISSR (429 aa). Residues 9–22 are compositionally biased toward basic and acidic residues; it reads EHNKNSNQDIEKNV. Over residues 29-42 the composition is skewed to polar residues; the sequence is NSNTINDQNENINK. Residues 430–450 form a helical membrane-spanning segment; it reads MIIIGIVMLILSFIIWPLTTW. Residues 451–462 lie on the Extracellular side of the membrane; it reads SLKTSTWGRETY. A helical membrane pass occupies residues 463–483; that stretch reads IIILFHTLMAINTLILIFFII. The Cytoplasmic portion of the chain corresponds to 484–498; it reads IGSTELCKYSECMSY. The chain crosses the membrane as a helical span at residues 499–519; that stretch reads VLFSLMVALWGLWNIAIGLTL. The Extracellular portion of the chain corresponds to 520–536; it reads EYNPNLSEMPTTTYELE. Residue Asn-524 is glycosylated (N-linked (GlcNAc...) asparagine). The chain crosses the membrane as a helical span at residues 537–557; that stretch reads MIYVLTYIYGFLPLVIIDIFF. Topologically, residues 558–564 are cytoplasmic; that stretch reads PSRTKYN. A helical transmembrane segment spans residues 565-585; sequence WIIHLIFIFLNSSSIILVGSA. The Extracellular segment spans residues 586-592; it reads KPDFVPE. A helical membrane pass occupies residues 593-613; that stretch reads IYVVFRILAYTTLCIFLYIGS. Residues 614–1139 lie on the Cytoplasmic side of the membrane; the sequence is YTSELQIRYV…TLFFIKNVSD (526 aa). The PDEase domain maps to 775–1098; the sequence is INISQLTKMI…IMWDTLMKEE (324 aa). His-847 (proton donor) is an active-site residue. 847–851 is a binding site for a nucleoside 3',5'-cyclic phosphate; that stretch reads HNTIH. The a divalent metal cation site is built by His-851, His-887, Asp-888, and Asp-1000. The a nucleoside 3',5'-cyclic phosphate site is built by Asp-888, Asp-1000, and Gln-1052.

Belongs to the cyclic nucleotide phosphodiesterase family. It depends on a divalent metal cation as a cofactor.

It is found in the cell membrane. The protein localises to the endoplasmic reticulum membrane. It carries out the reaction 3',5'-cyclic GMP + H2O = GMP + H(+). It catalyses the reaction 3',5'-cyclic AMP + H2O = AMP + H(+). Its pathway is purine metabolism; 3',5'-cyclic GMP degradation; GMP from 3',5'-cyclic GMP: step 1/1. The protein operates within purine metabolism; 3',5'-cyclic AMP degradation; AMP from 3',5'-cyclic AMP: step 1/1. Its function is as follows. Plays a role in signal transduction by regulating the intracellular concentration of cyclic nucleotides cAMP and cGMP. Catalyzes the hydrolysis of both cAMP and cGMP to 5'-AMP and 5'-GMP, respectively. By regulating cAMP levels during the asexual blood stage and, thus PKA activation, required for merozoite invasion of erythrocytes and for the parasite development immediately following invasion. The protein is Dual 3',5'-cyclic-AMP and -GMP phosphodiesterase beta of Plasmodium falciparum (isolate 3D7).